A 307-amino-acid polypeptide reads, in one-letter code: tRNA pseudouridine synthase B (307 aa).

Catalysis depends on D38, which acts as the Nucleophile.

The protein belongs to the pseudouridine synthase TruB family. Type 1 subfamily.

It catalyses the reaction uridine(55) in tRNA = pseudouridine(55) in tRNA. Functionally, responsible for synthesis of pseudouridine from uracil-55 in the psi GC loop of transfer RNAs. The sequence is that of tRNA pseudouridine synthase B from Bacillus cereus (strain ATCC 10987 / NRS 248).